The chain runs to 582 residues: Probable DNA ligase (582 aa).

E248 contributes to the ATP binding site. The N6-AMP-lysine intermediate role is filled by K250. R255, R270, E299, F339, R416, and K422 together coordinate ATP.

This sequence belongs to the ATP-dependent DNA ligase family. It depends on Mg(2+) as a cofactor.

The enzyme catalyses ATP + (deoxyribonucleotide)n-3'-hydroxyl + 5'-phospho-(deoxyribonucleotide)m = (deoxyribonucleotide)n+m + AMP + diphosphate.. DNA ligase that seals nicks in double-stranded DNA during DNA replication, DNA recombination and DNA repair. The sequence is that of Probable DNA ligase from Persephonella marina (strain DSM 14350 / EX-H1).